Consider the following 263-residue polypeptide: Formamidopyrimidine-DNA glycosylase (263 aa).

Residue Pro2 is the Schiff-base intermediate with DNA of the active site. Residue Glu3 is the Proton donor of the active site. Residue Lys59 is the Proton donor; for beta-elimination activity of the active site. DNA is bound by residues His93 and Arg111. The segment at 229 to 263 (KVYGKNGSLCVRCNNVLIRERHAGRSTHYCPHCQK) adopts an FPG-type zinc-finger fold. The active-site Proton donor; for delta-elimination activity is the Arg253.

This sequence belongs to the FPG family. In terms of assembly, monomer. The cofactor is Zn(2+).

The enzyme catalyses Hydrolysis of DNA containing ring-opened 7-methylguanine residues, releasing 2,6-diamino-4-hydroxy-5-(N-methyl)formamidopyrimidine.. It catalyses the reaction 2'-deoxyribonucleotide-(2'-deoxyribose 5'-phosphate)-2'-deoxyribonucleotide-DNA = a 3'-end 2'-deoxyribonucleotide-(2,3-dehydro-2,3-deoxyribose 5'-phosphate)-DNA + a 5'-end 5'-phospho-2'-deoxyribonucleoside-DNA + H(+). Functionally, involved in base excision repair of DNA damaged by oxidation or by mutagenic agents. Acts as a DNA glycosylase that recognizes and removes damaged bases. Has a preference for oxidized purines, such as 7,8-dihydro-8-oxoguanine (8-oxoG). Has AP (apurinic/apyrimidinic) lyase activity and introduces nicks in the DNA strand. Cleaves the DNA backbone by beta-delta elimination to generate a single-strand break at the site of the removed base with both 3'- and 5'-phosphates. The polypeptide is Formamidopyrimidine-DNA glycosylase (Carboxydothermus hydrogenoformans (strain ATCC BAA-161 / DSM 6008 / Z-2901)).